A 54-amino-acid chain; its full sequence is Large ribosomal subunit protein bL33 (54 aa).

This sequence belongs to the bacterial ribosomal protein bL33 family.

In Corynebacterium jeikeium (strain K411), this protein is Large ribosomal subunit protein bL33.